A 755-amino-acid chain; its full sequence is Periplasmic nitrate reductase (755 aa).

The segment at residues 1–32 (MSTSRRDFLKYFAMSAAVAAASGAGFGSLALA) is a signal peptide (tat-type signal). Residues 38–93 (EKWVKGVCRYCGTGCGVLVGVKDGKAVAIQGDPNNHNAGLLCLKGSLLIPVLNSKE) enclose the 4Fe-4S Mo/W bis-MGD-type domain. [4Fe-4S] cluster-binding residues include Cys-45, Cys-48, Cys-52, and Cys-79. Residues Lys-81, Gln-143, Asn-168, Cys-172, 208–212 (NTSEA), 236–238 (DPR), 255–257 (GTD), Met-340, Gln-344, Asn-450, 475–477 (IEA), and 647–656 (SMRVIDHWHT) contribute to the Mo-bis(molybdopterin guanine dinucleotide) site. Residues 648–653 (MRVIDH) and Phe-721 contribute to the substrate site. The Mo-bis(molybdopterin guanine dinucleotide) site is built by Asn-729 and Lys-746.

The protein belongs to the prokaryotic molybdopterin-containing oxidoreductase family. NasA/NapA/NarB subfamily. In terms of assembly, monomer. Component of the periplasmic nitrate reductase NapAB complex composed of NapA and NapB. [4Fe-4S] cluster serves as cofactor. Mo-bis(molybdopterin guanine dinucleotide) is required as a cofactor. Predicted to be exported by the Tat system. The position of the signal peptide cleavage has been experimentally proven.

The protein resides in the periplasm. The catalysed reaction is 2 Fe(II)-[cytochrome] + nitrate + 2 H(+) = 2 Fe(III)-[cytochrome] + nitrite + H2O. Its activity is regulated as follows. Activated by potassium and sodium ions and inhibited by magnesium and calcium ions. Functionally, catalytic subunit of the periplasmic nitrate reductase complex NapAB. Receives electrons from NapB and catalyzes the reduction of nitrate to nitrite. The sequence is that of Periplasmic nitrate reductase from Desulfovibrio desulfuricans (strain ATCC 27774 / DSM 6949 / MB).